The chain runs to 203 residues: Large ribosomal subunit protein uL13 (203 aa).

Alanine 2 carries the post-translational modification N-acetylalanine. Position 59 is a citrulline (arginine 59). Serine 77 carries the phosphoserine modification. At arginine 140 the chain carries Citrulline. Lysine 191 is modified (N6-acetyllysine).

Belongs to the universal ribosomal protein uL13 family. Component of the 60S ribosome. Component of the GAIT complex. Interacts with EIF4G1. In terms of processing, phosphorylation at Ser-77 upon interferon-gamma treatment in macrophages involves a DAPK1-DAPK3 kinase cascade and is causing release from the ribosome, association with the GAIT complex and subsequent involvement in transcript-selective translation inhibition. Post-translationally, citrullinated by PADI4.

It localises to the cytoplasm. Functionally, associated with ribosomes but is not required for canonical ribosome function and has extra-ribosomal functions. Component of the GAIT (gamma interferon-activated inhibitor of translation) complex which mediates interferon-gamma-induced transcript-selective translation inhibition in inflammation processes. Upon interferon-gamma activation and subsequent phosphorylation dissociates from the ribosome and assembles into the GAIT complex which binds to stem loop-containing GAIT elements in the 3'-UTR of diverse inflammatory mRNAs (such as ceruplasmin) and suppresses their translation. In the GAIT complex interacts with m7G cap-bound eIF4G at or near the eIF3-binding site and blocks the recruitment of the 43S ribosomal complex. Involved in methylation of rRNA. The sequence is that of Large ribosomal subunit protein uL13 (RPL13A) from Canis lupus familiaris (Dog).